The following is a 676-amino-acid chain: Urocanate hydratase (676 aa).

Residues G126–G127, Q204, G251–S253, E271, N317–V318, Q343–H347, Y354–Y355, and Y403 each bind NAD(+). Residue K534 is modified to N6-succinyllysine. Residue G594 coordinates NAD(+).

Belongs to the urocanase family. Requires NAD(+) as cofactor.

The catalysed reaction is 4-imidazolone-5-propanoate = trans-urocanate + H2O. Its pathway is amino-acid degradation; L-histidine degradation into L-glutamate; N-formimidoyl-L-glutamate from L-histidine: step 2/3. The polypeptide is Urocanate hydratase (Uroc1) (Mus musculus (Mouse)).